A 144-amino-acid polypeptide reads, in one-letter code: Peptide methionine sulfoxide reductase B7 (144 aa).

In terms of domain architecture, MsrB spans 19–140 (DEEWRAVLSP…NSVSLKFSSA (122 aa)). Residues C58, C61, C104, and C107 each coordinate Zn(2+). Cysteines 76 and 129 form a disulfide. The active-site Nucleophile is C129.

It belongs to the MsrB Met sulfoxide reductase family. The cofactor is Zn(2+).

It is found in the cytoplasm. The protein resides in the cytosol. It carries out the reaction L-methionyl-[protein] + [thioredoxin]-disulfide + H2O = L-methionyl-(R)-S-oxide-[protein] + [thioredoxin]-dithiol. In terms of biological role, catalyzes the reduction of methionine sulfoxide (MetSO) to methionine in proteins. Plays a protective role against oxidative stress by restoring activity to proteins that have been inactivated by methionine oxidation. MSRB family specifically reduces the MetSO R-enantiomer. This chain is Peptide methionine sulfoxide reductase B7 (MSRB7), found in Arabidopsis thaliana (Mouse-ear cress).